Reading from the N-terminus, the 513-residue chain is MSEFILEMRGITKQFPGVKALDNVNFKVREGEIHALCGENGAGKSTLMKVLSGVYPYGTYDGEIVFKGEVCKFKNIKQSEQLGIVIIHQELALIPYLSIAENIFLGNERAKKGIINWNETIAQTKKLLQKVGLEESPHTLVGQLGVGKQQLVEIAKALAKDVKLLILDEPTAALNEDDSENLLNLLLELKKQGLSAIIISHKLNEITKVADSITILRDGKTIETLDMKHDEVTEDRIIRGMVGRDLTNRYPARTPKIGEVIFEVKNWTVYHPIYSERKVLDHINLSIRRGEIVGIAGLMGAGRTELAMSIFGRSYGKKISGEIWKNGVKIDVSDVSKAIANGIAYVTEDRKGNGLILMEDIRKNITLSRLGKISNHFVVDENQEIVESERFRDQFKIKTPSVFQKVEALSGGNQQKVVLSKWIFAEPDILILDEPTRGIDVGAKYEIYTIIQQLADAGKGILMISSELPEILGMCDRIYVMSEGRITGEVSREEATQEKLMRLMTKTAIQEGA.

ABC transporter domains are found at residues 6 to 243 (LEMR…GMVG) and 264 to 508 (VKNW…TKTA). ATP is bound at residue 38–45 (GENGAGKS).

This sequence belongs to the ABC transporter superfamily.

The protein localises to the cell membrane. The enzyme catalyses L-arabinose(out) + ATP + H2O = L-arabinose(in) + ADP + phosphate + H(+). Functionally, part of the binding-protein-dependent transport system for L-arabinose. Probably responsible for energy coupling to the transport system. This chain is L-arabinose transport ATP-binding protein AraG (araG), found in Geobacillus stearothermophilus (Bacillus stearothermophilus).